The chain runs to 363 residues: GDSL esterase/lipase At3g14220 (363 aa).

Positions 1–28 (MAKNRNLVFFLGVLASFTLSSFPVTVSG) are cleaved as a signal peptide. Catalysis depends on serine 39, which acts as the Nucleophile. Residues aspartate 318 and histidine 321 contribute to the active site.

Belongs to the 'GDSL' lipolytic enzyme family.

The protein resides in the secreted. This Arabidopsis thaliana (Mouse-ear cress) protein is GDSL esterase/lipase At3g14220.